The chain runs to 272 residues: Shikimate dehydrogenase (NADP(+)) (272 aa).

Shikimate is bound by residues 20–22 and Thr-67; that span reads TMS. The active-site Proton acceptor is the Lys-71. Glu-83 contacts NADP(+). Residues Asn-92 and Asp-107 each contribute to the shikimate site. NADP(+) is bound by residues 129–133, 153–158, and Leu-216; these read GAGGA and NRTKSK. Position 218 (Tyr-218) interacts with shikimate. An NADP(+)-binding site is contributed by Gly-239.

The protein belongs to the shikimate dehydrogenase family. Homodimer.

The catalysed reaction is shikimate + NADP(+) = 3-dehydroshikimate + NADPH + H(+). The protein operates within metabolic intermediate biosynthesis; chorismate biosynthesis; chorismate from D-erythrose 4-phosphate and phosphoenolpyruvate: step 4/7. Its function is as follows. Involved in the biosynthesis of the chorismate, which leads to the biosynthesis of aromatic amino acids. Catalyzes the reversible NADPH linked reduction of 3-dehydroshikimate (DHSA) to yield shikimate (SA). The polypeptide is Shikimate dehydrogenase (NADP(+)) (Maridesulfovibrio salexigens (strain ATCC 14822 / DSM 2638 / NCIMB 8403 / VKM B-1763) (Desulfovibrio salexigens)).